We begin with the raw amino-acid sequence, 87 residues long: Apolipoprotein C-I (87 aa).

The N-terminal stretch at 1–26 is a signal peptide; sequence MRLILSLPVLAVVLAMVLEGPAPAQA.

The protein belongs to the apolipoprotein C1 family.

The protein localises to the secreted. Its function is as follows. Inhibitor of lipoprotein binding to the low density lipoprotein (LDL) receptor, LDL receptor-related protein, and very low density lipoprotein (VLDL) receptor. Associates with high density lipoproteins (HDL) and the triacylglycerol-rich lipoproteins in the plasma and makes up about 10% of the protein of the VLDL and 2% of that of HDL. Appears to interfere directly with fatty acid uptake and is also the major plasma inhibitor of cholesteryl ester transfer protein (CETP). Binds free fatty acids and reduces their intracellular esterification. Modulates the interaction of APOE with beta-migrating VLDL and inhibits binding of beta-VLDL to the LDL receptor-related protein. The polypeptide is Apolipoprotein C-I (APOC1) (Pteropus vampyrus (Large flying fox)).